The chain runs to 496 residues: MSKPIRVRYAPSPTGLLHIGNARTALFNYLYARRHGGTFIIRIEDTDRKRHVEDGERSQLENLKWLGMDWDESPETHENYRQSERLALYQQYIDQLLAEGKAYKSYVTEEELAAERERQEAAGETPRYINEFIGMSADEKAKYIAEREAAGIVPTVRLAVNESGIYKWTDMVKGDIEFEGGNIGGDWVIQKKDGYPTYNFAVVVDDHDMQISHVIRGDDHIANTPKQLMVYEALGWEAPEFGHMTLIINSETGKKLSKRDTNTLQFIEDYRKKGYMPEAVFNFIALLGWNPGGEEEIFSREQLIALFDENRLSKSPAAFDQKKMDWMSNEYLKHADFETVYALCKPFLEEAGRLTEKAEKLVELYKPQLKSADEIIPLTDLFFSDFPELTEAEKEVMAGETVSTVLQAFKAKLEAMSDEDFKPENIFPQIKAVQKETGIKGKNLFMPIRIAVSGEMHGPELPNTIYLLGRDKSIEHIKNHAIRLYRSPLFLNALRS.

The 'HIGH' region motif lies at 11 to 21 (PSPTGLLHIGN). The short motif at 255 to 259 (KLSKR) is the 'KMSKS' region element. Lys258 provides a ligand contact to ATP.

Belongs to the class-I aminoacyl-tRNA synthetase family. Glutamate--tRNA ligase type 1 subfamily. Monomer.

It is found in the cytoplasm. It catalyses the reaction tRNA(Glu) + L-glutamate + ATP = L-glutamyl-tRNA(Glu) + AMP + diphosphate. In terms of biological role, catalyzes the attachment of glutamate to tRNA(Glu) in a two-step reaction: glutamate is first activated by ATP to form Glu-AMP and then transferred to the acceptor end of tRNA(Glu). The polypeptide is Glutamate--tRNA ligase (Streptococcus pyogenes serotype M49 (strain NZ131)).